Here is a 241-residue protein sequence, read N- to C-terminus: Large ribosomal subunit protein uL2 (241 aa).

Residues Ala200–Arg241 are disordered.

Belongs to the universal ribosomal protein uL2 family. Part of the 50S ribosomal subunit. Forms a bridge to the 30S subunit in the 70S ribosome.

One of the primary rRNA binding proteins. Required for association of the 30S and 50S subunits to form the 70S ribosome, for tRNA binding and peptide bond formation. It has been suggested to have peptidyltransferase activity; this is somewhat controversial. Makes several contacts with the 16S rRNA in the 70S ribosome. This Methanosphaera stadtmanae (strain ATCC 43021 / DSM 3091 / JCM 11832 / MCB-3) protein is Large ribosomal subunit protein uL2.